A 263-amino-acid polypeptide reads, in one-letter code: MNPVAGDDVVVIARDVTKRFGDTLALDHVSLDVHRSELLVLLGLSGSGKSTLLRCLNGLHPVTSGTVDVGGTRVDQASGAQLRALRRRVGFVFQHFNLVGRLSCLENVLIGGLGRLRLPRYGALTYPRHMRAEALAHLDRVGLADYADRRADTLSGGQQQRVAIARTLMQKPALLLADEPVASLDPENAGVVMDLLFRVCIEEKLTVVCTLHQVDLALGWAHRLVGLQGGRKVLDRPAVGMTRDDVMAVYQRVEPAVTPARRV.

The ABC transporter domain occupies V11 to E254. Residue G43 to S50 coordinates ATP.

The protein belongs to the ABC transporter superfamily. Phosphonate/phosphate importer (TC 3.A.1.9.2) family. In terms of assembly, the complex is composed of two ATP-binding proteins (PhnC), two transmembrane proteins (PhnE) and a solute-binding protein (PhnD).

It is found in the cell membrane. The catalysed reaction is phosphate(out) + ATP + H2O = ADP + 2 phosphate(in) + H(+). Functionally, part of the ABC transporter complex PhnCDE involved in phosphate import. Responsible for energy coupling to the transport system. In Mycolicibacterium smegmatis (strain ATCC 700084 / mc(2)155) (Mycobacterium smegmatis), this protein is Phosphate-import ATP-binding protein PhnC (phnC).